A 545-amino-acid chain; its full sequence is CTP synthase (545 aa).

Positions 1-266 (MTTNYIFVTG…DDLVCARFGI (266 aa)) are amidoligase domain. S14 is a CTP binding site. Residue S14 coordinates UTP. ATP is bound by residues 15–20 (SLGKGI) and D72. Mg(2+) is bound by residues D72 and E140. CTP-binding positions include 147-149 (DIE), 187-192 (KTKPTQ), and K223. Residues 187-192 (KTKPTQ) and K223 each bind UTP. Residue 239–241 (KDV) coordinates ATP. The 252-residue stretch at 291-542 (TIGMVGKYTE…VKAAGQFQRG (252 aa)) folds into the Glutamine amidotransferase type-1 domain. An L-glutamine-binding site is contributed by G352. C379 serves as the catalytic Nucleophile; for glutamine hydrolysis. L-glutamine contacts are provided by residues 380–383 (LGMQ), E403, and R470. Catalysis depends on residues H515 and E517.

This sequence belongs to the CTP synthase family. Homotetramer.

It catalyses the reaction UTP + L-glutamine + ATP + H2O = CTP + L-glutamate + ADP + phosphate + 2 H(+). The catalysed reaction is L-glutamine + H2O = L-glutamate + NH4(+). The enzyme catalyses UTP + NH4(+) + ATP = CTP + ADP + phosphate + 2 H(+). It participates in pyrimidine metabolism; CTP biosynthesis via de novo pathway; CTP from UDP: step 2/2. With respect to regulation, allosterically activated by GTP, when glutamine is the substrate; GTP has no effect on the reaction when ammonia is the substrate. The allosteric effector GTP functions by stabilizing the protein conformation that binds the tetrahedral intermediate(s) formed during glutamine hydrolysis. Inhibited by the product CTP, via allosteric rather than competitive inhibition. In terms of biological role, catalyzes the ATP-dependent amination of UTP to CTP with either L-glutamine or ammonia as the source of nitrogen. Regulates intracellular CTP levels through interactions with the four ribonucleotide triphosphates. The polypeptide is CTP synthase (Vibrio cholerae serotype O1 (strain ATCC 39541 / Classical Ogawa 395 / O395)).